The following is a 184-amino-acid chain: Photosystem I assembly protein Ycf3 (184 aa).

TPR repeat units follow at residues 31-64 (AFAY…DEDQ), 68-101 (SYTL…NSNL), and 131-164 (MEIS…APDN).

It belongs to the Ycf3 family.

It localises to the plastid. The protein resides in the chloroplast thylakoid membrane. Essential for the assembly of the photosystem I (PSI) complex. May act as a chaperone-like factor to guide the assembly of the PSI subunits. In Thalassiosira pseudonana (Marine diatom), this protein is Photosystem I assembly protein Ycf3.